The chain runs to 105 residues: Large ribosomal subunit protein uL24 (105 aa).

The protein belongs to the universal ribosomal protein uL24 family. In terms of assembly, part of the 50S ribosomal subunit.

One of two assembly initiator proteins, it binds directly to the 5'-end of the 23S rRNA, where it nucleates assembly of the 50S subunit. Functionally, one of the proteins that surrounds the polypeptide exit tunnel on the outside of the subunit. The protein is Large ribosomal subunit protein uL24 of Buchnera aphidicola subsp. Cinara cedri (strain Cc).